Consider the following 343-residue polypeptide: Probable transcription factor MYB58 (343 aa).

Positions 1 to 30 (MARAPGGVRRRSGRRGAGGGGAGGGGEALR) are disordered. Gly residues predominate over residues 15 to 27 (RGAGGGGAGGGGE). HTH myb-type domains lie at 26–78 (GEAL…VNKL) and 79–134 (RPNL…KRLA). DNA-binding regions (H-T-H motif) lie at residues 54 to 77 (WSSIRSKGLLPRTGKSCRLRWVNK) and 107 to 130 (WARIATYLQGRTDNDVKNFWSTRQ). Disordered stretches follow at residues 137-169 (LRGPLPAARPNKHNSGKGKAPSSSSLDSQTATF), 219-238 (PPADGEASSSNAAQSAPPPL), and 307-343 (DDLPPNMFDDAVDQPPPPPPPPPPPSPSPSPSRDDVL). Residues 157–169 (PSSSSLDSQTATF) show a composition bias toward polar residues. Residues 320-336 (QPPPPPPPPPPPSPSPS) are compositionally biased toward pro residues.

It is found in the nucleus. Its function is as follows. Probable transcription factor. This chain is Probable transcription factor MYB58, found in Oryza sativa subsp. japonica (Rice).